Consider the following 471-residue polypeptide: UDP-N-acetylmuramoylalanine--D-glutamate ligase (471 aa).

Residue 122–128 (GTNGKTT) coordinates ATP.

This sequence belongs to the MurCDEF family.

The protein resides in the cytoplasm. The enzyme catalyses UDP-N-acetyl-alpha-D-muramoyl-L-alanine + D-glutamate + ATP = UDP-N-acetyl-alpha-D-muramoyl-L-alanyl-D-glutamate + ADP + phosphate + H(+). It participates in cell wall biogenesis; peptidoglycan biosynthesis. Its function is as follows. Cell wall formation. Catalyzes the addition of glutamate to the nucleotide precursor UDP-N-acetylmuramoyl-L-alanine (UMA). This is UDP-N-acetylmuramoylalanine--D-glutamate ligase from Streptomyces coelicolor (strain ATCC BAA-471 / A3(2) / M145).